Consider the following 388-residue polypeptide: Probable peptidoglycan glycosyltransferase FtsW (388 aa).

Residues 1–19 (MMSPSTSAPHNQPIQPELD) are Cytoplasmic-facing. The chain crosses the membrane as a helical span at residues 20 to 40 (VLLVSTVLLLLGLGLVMVYSA). Residues 41–55 (SIAIAEAKFGEGSSY) lie on the Periplasmic side of the membrane. Residues 56–76 (YFLARQASYILAGIAVGIGCF) traverse the membrane as a helical segment. The Cytoplasmic segment spans residues 77 to 89 (RIPLRWWQAYSHY). Residues 90–110 (LLGLGILLLLVVLIPGISHEI) form a helical membrane-spanning segment. The Periplasmic portion of the chain corresponds to 111–116 (NGSRRW). Residues 117–137 (IPLGITSFQPSELMKLIILIF) form a helical membrane-spanning segment. Topologically, residues 138-151 (TADYVVRKAAFKDH) are cytoplasmic. A helical membrane pass occupies residues 152 to 172 (FFKGFLPILALLTIVSLLLLM). Residues 173 to 175 (EPD) lie on the Periplasmic side of the membrane. The next 2 helical transmembrane spans lie at 176–196 (LGAT…NGMS) and 197–217 (LKMF…LIII). At 218–284 (EPYRMDRINA…DFMFAVLAEE (67 aa)) the chain is on the periplasmic side. Residues 285-305 (LGFAGVVTVISLFFFLLVRIF) traverse the membrane as a helical segment. The Cytoplasmic segment spans residues 306 to 324 (KVGRTAARLGDQFGSLVAQ). Residues 325 to 345 (GIGVWLGLQAFINMGVNMGLL) form a helical membrane-spanning segment. Residues 346–351 (PTKGLT) lie on the Periplasmic side of the membrane. A helical transmembrane segment spans residues 352-372 (LPFMSYGGSSIVINSIAIAIL). At 373 to 388 (LRIDWENRLKRRGLNA) the chain is on the cytoplasmic side.

It belongs to the SEDS family. FtsW subfamily.

The protein localises to the cell inner membrane. It carries out the reaction [GlcNAc-(1-&gt;4)-Mur2Ac(oyl-L-Ala-gamma-D-Glu-L-Lys-D-Ala-D-Ala)](n)-di-trans,octa-cis-undecaprenyl diphosphate + beta-D-GlcNAc-(1-&gt;4)-Mur2Ac(oyl-L-Ala-gamma-D-Glu-L-Lys-D-Ala-D-Ala)-di-trans,octa-cis-undecaprenyl diphosphate = [GlcNAc-(1-&gt;4)-Mur2Ac(oyl-L-Ala-gamma-D-Glu-L-Lys-D-Ala-D-Ala)](n+1)-di-trans,octa-cis-undecaprenyl diphosphate + di-trans,octa-cis-undecaprenyl diphosphate + H(+). It participates in cell wall biogenesis; peptidoglycan biosynthesis. Its function is as follows. Peptidoglycan polymerase that is essential for cell division. The sequence is that of Probable peptidoglycan glycosyltransferase FtsW from Nitrosomonas europaea (strain ATCC 19718 / CIP 103999 / KCTC 2705 / NBRC 14298).